The chain runs to 501 residues: 2-phosphoxylose phosphatase 1 (501 aa).

The Cytoplasmic portion of the chain corresponds to 1–6 (MLLRNR). A helical; Signal-anchor for type II membrane protein membrane pass occupies residues 7–27 (FLLLLALAGLLAFLSLSLQFF). At 28-501 (SRWLPVSLQL…YYDACHQRLF (474 aa)) the chain is on the lumenal side. Catalysis depends on His-120, which acts as the Nucleophile. N-linked (GlcNAc...) asparagine glycosylation is found at Asn-328 and Asn-377. Asp-402 (proton donor) is an active-site residue. Asn-488 carries N-linked (GlcNAc...) asparagine glycosylation.

This sequence belongs to the histidine acid phosphatase family.

The protein localises to the golgi apparatus membrane. The catalysed reaction is 3-O-[beta-D-GlcA-(1-&gt;3)-beta-D-Gal-(1-&gt;3)-beta-D-Gal-(1-&gt;4)-beta-D-2-O-P-Xyl]-L-seryl-[protein] + H2O = 3-O-(beta-D-GlcA-(1-&gt;3)-beta-D-Gal-(1-&gt;3)-beta-D-Gal-(1-&gt;4)-beta-D-Xyl)-L-seryl-[protein] + phosphate. Responsible for the 2-O-dephosphorylation of xylose in the glycosaminoglycan-protein linkage region of proteoglycans thereby regulating the amount of mature glycosaminoglycan (GAG) chains. Sulfated glycosaminoglycans (GAGs), including heparan sulfate and chondroitin sulfate, are synthesized on the so-called common GAG-protein linkage region (GlcUAbeta1-3Galbeta1-3Galbeta1-4Xylbeta1-O-Ser) of core proteins, which is formed by the stepwise addition of monosaccharide residues by the respective specific glycosyltransferases. Xylose 2-O-dephosphorylation during completion of linkage region formation is a prerequisite for the initiation and efficient elongation of the repeating disaccharide region of GAG chains. The polypeptide is 2-phosphoxylose phosphatase 1 (Xenopus tropicalis (Western clawed frog)).